The sequence spans 247 residues: NAD-dependent protein deacetylase (247 aa).

The 247-residue stretch at 1–247 (MDTRKNLKEL…LGGIVEELGY (247 aa)) folds into the Deacetylase sirtuin-type domain. Residues A23, T27, F34, R35, Q104, I106, D107, and H122 each contribute to the NAD(+) site. Residue F34 coordinates nicotinamide. I106 and D107 together coordinate nicotinamide. H122 serves as the catalytic Proton acceptor. The Zn(2+) site is built by C130, C133, C152, and C155. Residues T193, S194, N216, and I234 each coordinate NAD(+).

The protein belongs to the sirtuin family. Class U subfamily. Zn(2+) serves as cofactor.

It is found in the cytoplasm. The enzyme catalyses N(6)-acetyl-L-lysyl-[protein] + NAD(+) + H2O = 2''-O-acetyl-ADP-D-ribose + nicotinamide + L-lysyl-[protein]. Its function is as follows. NAD-dependent protein deacetylase which modulates the activities of several enzymes which are inactive in their acetylated form. In Clostridium tetani (strain Massachusetts / E88), this protein is NAD-dependent protein deacetylase.